A 363-amino-acid polypeptide reads, in one-letter code: Flagellar P-ring protein (363 aa).

The signal sequence occupies residues 1 to 20; sequence MKLKLILAVAMLAFSLPSQA.

It belongs to the FlgI family. The basal body constitutes a major portion of the flagellar organelle and consists of four rings (L,P,S, and M) mounted on a central rod.

The protein resides in the periplasm. Its subcellular location is the bacterial flagellum basal body. In terms of biological role, assembles around the rod to form the L-ring and probably protects the motor/basal body from shearing forces during rotation. The sequence is that of Flagellar P-ring protein from Shewanella sp. (strain MR-7).